We begin with the raw amino-acid sequence, 255 residues long: MELLFDVGNSYTMVGIHQDGKFLTWRIGPSSFESEDGLFVIISNLLNRVNVDLNKITLAGISSVVPNVNFILEQMLKKYFNVEIIFVGTKNKINNIAYLVDYPKEVGADRICNVIACKQEYGDNVIALDFGTAITVDVLEGGNFVGGAIIPGFKTAIGALFSRTAQLPKVEIKIPEYHLGKNTIDNIQIGVIKTTLYGIERLIDEIKRERNKDFVVVATGGDMSFLSSKISIFKHYDPYLTLKGILYYSKEIKKL.

ATP is bound at residue 6–13 (DVGNSYTM). 107-110 (GADR) serves as a coordination point for substrate. Asp-109 serves as the catalytic Proton acceptor. A K(+)-binding site is contributed by Asp-129. ATP is bound at residue Thr-132. Position 183 (Thr-183) interacts with substrate.

This sequence belongs to the type III pantothenate kinase family. Homodimer. NH4(+) serves as cofactor. Requires K(+) as cofactor.

It localises to the cytoplasm. The catalysed reaction is (R)-pantothenate + ATP = (R)-4'-phosphopantothenate + ADP + H(+). It functions in the pathway cofactor biosynthesis; coenzyme A biosynthesis; CoA from (R)-pantothenate: step 1/5. Functionally, catalyzes the phosphorylation of pantothenate (Pan), the first step in CoA biosynthesis. This Petrotoga mobilis (strain DSM 10674 / SJ95) protein is Type III pantothenate kinase.